The sequence spans 458 residues: Argininosuccinate lyase (458 aa).

It belongs to the lyase 1 family. Argininosuccinate lyase subfamily.

The protein localises to the cytoplasm. It carries out the reaction 2-(N(omega)-L-arginino)succinate = fumarate + L-arginine. The protein operates within amino-acid biosynthesis; L-arginine biosynthesis; L-arginine from L-ornithine and carbamoyl phosphate: step 3/3. In Trichlorobacter lovleyi (strain ATCC BAA-1151 / DSM 17278 / SZ) (Geobacter lovleyi), this protein is Argininosuccinate lyase.